Here is a 296-residue protein sequence, read N- to C-terminus: Nucleotide-binding protein Pnuc_1915 (296 aa).

Residue Gly-8–Ser-15 coordinates ATP. Asp-57–Arg-60 is a GTP binding site.

This sequence belongs to the RapZ-like family.

Its function is as follows. Displays ATPase and GTPase activities. The polypeptide is Nucleotide-binding protein Pnuc_1915 (Polynucleobacter asymbioticus (strain DSM 18221 / CIP 109841 / QLW-P1DMWA-1) (Polynucleobacter necessarius subsp. asymbioticus)).